We begin with the raw amino-acid sequence, 606 residues long: DNA-directed RNA polymerase III subunit RPC3 (606 aa).

The segment at 533–554 (LTFCMADILSNIQQFKNDNKIL) is leucine-zipper.

The protein belongs to the RNA polymerase beta chain family. In terms of assembly, component of the RNA polymerase III (Pol III) complex consisting of 17 subunits.

The protein localises to the nucleus. Its function is as follows. DNA-dependent RNA polymerase catalyzes the transcription of DNA into RNA using the four ribonucleoside triphosphates as substrates. Specific core component of RNA polymerase III which synthesizes small RNAs, such as 5S rRNA and tRNAs. This chain is DNA-directed RNA polymerase III subunit RPC3 (RPC82), found in Debaryomyces hansenii (strain ATCC 36239 / CBS 767 / BCRC 21394 / JCM 1990 / NBRC 0083 / IGC 2968) (Yeast).